Reading from the N-terminus, the 556-residue chain is Arginine--tRNA ligase 2 (556 aa).

The short motif at Ala132–His142 is the 'HIGH' region element.

Belongs to the class-I aminoacyl-tRNA synthetase family. As to quaternary structure, monomer.

It is found in the cytoplasm. It carries out the reaction tRNA(Arg) + L-arginine + ATP = L-arginyl-tRNA(Arg) + AMP + diphosphate. The polypeptide is Arginine--tRNA ligase 2 (Bacillus thuringiensis subsp. konkukian (strain 97-27)).